A 430-amino-acid polypeptide reads, in one-letter code: MGGKDYEFGGPIGTGVLMLILPPISHYLHFLITPRGAPPPEFWSAPLETLKSVTPTFSSLFSLHATLAVAAYYLLLVALMYVLPAEIAEGVVLKDGSRLKYRCNAFTTFLVFFTFLGTMTVLEGPTWWFWSYLTDNFAQLQSASIVFSYAMSLWVYIRSYRPMPKGKEVILSPVGFKGNHIHDFWMGRELNPRIGEWLDIKQLHELRPGLMGWILFNLAWTVKQYNTHGFVSDSIVLVNLFETWYVVDALWNESKVLTTMDITTDGLGVMLLFGNAVWVPFMYCLQARYLASFPVHLGLLGIAGVLAVQFTGYAIFRGANNQKNAFRTNPADPAVSHLKFMTTKSGSKLLISGWWGVARHVNYFGDWIMAWSYCLTTGFNTPLTYFYVIYFGILLLHRDRRDEAKCREKYGKDWDRYCKVVKWRIIPGIY.

A run of 6 helical transmembrane segments spans residues 12 to 32, 67 to 87, 109 to 129, 230 to 250, 267 to 287, and 290 to 310; these read IGTG…HFLI, LAVA…PAEI, FLVF…TWWF, FVSD…VDAL, LGVM…CLQA, and LASF…AVQF. Residues lysine 323, arginine 327, leucine 350, tryptophan 355, and 362–363 contribute to the NADP(+) site; that span reads NY. Helical transmembrane passes span 349 to 369 and 376 to 396; these read LLIS…DWIM and TTGF…ILLL. Residues aspartate 402, 406–410, and tyrosine 417 each bind NADP(+); that span reads CREKY.

The protein belongs to the ERG4/ERG24 family.

It localises to the membrane. The enzyme catalyses 4,4-dimethyl-5alpha-cholesta-8,24-dien-3beta-ol + NADP(+) = 4,4-dimethyl-5alpha-cholesta-8,14,24-trien-3beta-ol + NADPH + H(+). It functions in the pathway steroid biosynthesis; zymosterol biosynthesis; zymosterol from lanosterol: step 2/6. Functionally, reduces the C14=C15 double bond of 4,4-dimethyl-cholesta-8,14,24-trienol to produce 4,4-dimethyl-cholesta-8,24-dienol. In Ascobolus immersus, this protein is Delta(14)-sterol reductase (ERG3).